The primary structure comprises 214 residues: Adenylate kinase (214 aa).

10 to 15 (GAGKGT) is a binding site for ATP. An NMP region spans residues 30–59 (STGDMLRAAVKAQTPVGLKAKAVMDRGELV). Residues Thr31, Arg36, 57–59 (ELV), 85–88 (GYPR), and Gln92 contribute to the AMP site. The LID stretch occupies residues 126–163 (GRFTCAKCGTGYHDRHKQPAREGVCDVCGSTEFKRRPD). Arg127 is an ATP binding site. Residues Cys130, Cys133, Cys150, and Cys153 each coordinate Zn(2+). AMP-binding residues include Arg160 and Arg172. Gly200 provides a ligand contact to ATP.

This sequence belongs to the adenylate kinase family. Monomer.

It localises to the cytoplasm. The catalysed reaction is AMP + ATP = 2 ADP. The protein operates within purine metabolism; AMP biosynthesis via salvage pathway; AMP from ADP: step 1/1. Functionally, catalyzes the reversible transfer of the terminal phosphate group between ATP and AMP. Plays an important role in cellular energy homeostasis and in adenine nucleotide metabolism. The polypeptide is Adenylate kinase (Erythrobacter litoralis (strain HTCC2594)).